Reading from the N-terminus, the 729-residue chain is Monosaccharide-sensing protein 2 (729 aa).

6 consecutive transmembrane segments (helical) span residues 1 to 21 (MSGA…QGWD), 47 to 67 (LIVA…GGVA), 81 to 101 (ILYF…VLLL), 104 to 124 (LLDG…ISET), 139 to 159 (FTGS…SLMP), and 165 to 185 (LMLG…VFFL). Residues 347–363 (VGEGEDYPSDHGDDSED) show a composition bias toward acidic residues. 2 disordered regions span residues 347 to 367 (VGEG…DLHS) and 423 to 442 (ERED…RRGS). A compositionally biased stretch (basic and acidic residues) spans 423–434 (EREDESGQKEEG). Phosphoserine is present on residues S438 and G448. 6 helical membrane-spanning segments follow: residues 507 to 527 (ALVV…NGVL), 553 to 573 (ASLL…AVAM), 585 to 605 (LLTT…SNLV), 610 to 630 (IVHA…FVMG), 650 to 670 (ICIA…TYSL), and 679 to 699 (LAGV…FVFI).

It belongs to the major facilitator superfamily. Sugar transporter (TC 2.A.1.1) family. In terms of tissue distribution, mostly expressed in roots and stems, and, to a lower extent, in juvenile and adult leaves, and in flower tissues.

The protein localises to the vacuole membrane. The catalysed reaction is D-glucose(out) + H(+)(in) = D-glucose(in) + H(+)(out). The enzyme catalyses sucrose(out) + H(+)(in) = sucrose(in) + H(+)(out). Sugar proton-coupled antiporter which contributes to vacuolar sugar import (e.g. monosaccharides including glucose, sucrose and fructose), particularly during stress responses (e.g. in response to cold). This Arabidopsis thaliana (Mouse-ear cress) protein is Monosaccharide-sensing protein 2.